The sequence spans 879 residues: Alanine--tRNA ligase (879 aa).

Histidine 567, histidine 571, cysteine 669, and histidine 673 together coordinate Zn(2+).

It belongs to the class-II aminoacyl-tRNA synthetase family. The cofactor is Zn(2+).

Its subcellular location is the cytoplasm. The enzyme catalyses tRNA(Ala) + L-alanine + ATP = L-alanyl-tRNA(Ala) + AMP + diphosphate. Catalyzes the attachment of alanine to tRNA(Ala) in a two-step reaction: alanine is first activated by ATP to form Ala-AMP and then transferred to the acceptor end of tRNA(Ala). Also edits incorrectly charged Ser-tRNA(Ala) and Gly-tRNA(Ala) via its editing domain. This is Alanine--tRNA ligase from Lactobacillus acidophilus (strain ATCC 700396 / NCK56 / N2 / NCFM).